Here is a 130-residue protein sequence, read N- to C-terminus: Small ribosomal subunit protein uS11c (130 aa).

It belongs to the universal ribosomal protein uS11 family. Part of the 30S ribosomal subunit.

It localises to the plastid. The protein localises to the chloroplast. This is Small ribosomal subunit protein uS11c from Trieres chinensis (Marine centric diatom).